We begin with the raw amino-acid sequence, 274 residues long: 3-methyl-2-oxobutanoate hydroxymethyltransferase (274 aa).

Mg(2+)-binding residues include Asp49 and Asp88. Residues 49–50 (DS), Asp88, and Lys118 each bind 3-methyl-2-oxobutanoate. Glu120 is a Mg(2+) binding site. Glu187 (proton acceptor) is an active-site residue.

It belongs to the PanB family. In terms of assembly, homodecamer; pentamer of dimers. The cofactor is Mg(2+).

The protein localises to the cytoplasm. It catalyses the reaction 3-methyl-2-oxobutanoate + (6R)-5,10-methylene-5,6,7,8-tetrahydrofolate + H2O = 2-dehydropantoate + (6S)-5,6,7,8-tetrahydrofolate. Its pathway is cofactor biosynthesis; (R)-pantothenate biosynthesis; (R)-pantoate from 3-methyl-2-oxobutanoate: step 1/2. Functionally, catalyzes the reversible reaction in which hydroxymethyl group from 5,10-methylenetetrahydrofolate is transferred onto alpha-ketoisovalerate to form ketopantoate. This chain is 3-methyl-2-oxobutanoate hydroxymethyltransferase, found in Paramagnetospirillum magneticum (strain ATCC 700264 / AMB-1) (Magnetospirillum magneticum).